Consider the following 203-residue polypeptide: Lectin (203 aa).

The first 20 residues, Met-1 to Ala-20, serve as a signal peptide directing secretion. Residues Arg-21–Gly-53 constitute a propeptide that is removed on maturation.

As to quaternary structure, monomer.

Functionally, N-acetyl-D-glucosamine-specific lectin. Specifically agglutinates rabbit erythrocytes. This Ulva pertusa (Sea lettuce) protein is Lectin (UPL1).